We begin with the raw amino-acid sequence, 92 residues long: YcgL domain-containing protein SO_2575 (92 aa).

The YcgL domain occupies 1–85 (MLCAVYKSSR…PQVNLLAEHR (85 aa)).

This chain is YcgL domain-containing protein SO_2575, found in Shewanella oneidensis (strain ATCC 700550 / JCM 31522 / CIP 106686 / LMG 19005 / NCIMB 14063 / MR-1).